A 147-amino-acid polypeptide reads, in one-letter code: Lysozyme C (147 aa).

Positions 1–18 are cleaved as a signal peptide; it reads MRSLLILVLCFLPLAALG. A C-type lysozyme domain is found at 19–147; that stretch reads KVFGRCELAA…VQAWIRGCRL (129 aa). 4 cysteine pairs are disulfide-bonded: Cys-24/Cys-145, Cys-48/Cys-133, Cys-82/Cys-98, and Cys-94/Cys-112. Active-site residues include Glu-53 and Asp-70. Substrate is bound at residue Asp-119.

The protein belongs to the glycosyl hydrolase 22 family. In terms of assembly, monomer. As to expression, in the egg white and polymorphonuclear leukocytes.

The protein resides in the secreted. The catalysed reaction is Hydrolysis of (1-&gt;4)-beta-linkages between N-acetylmuramic acid and N-acetyl-D-glucosamine residues in a peptidoglycan and between N-acetyl-D-glucosamine residues in chitodextrins.. In terms of biological role, lysozymes have primarily a bacteriolytic function; those in tissues and body fluids are associated with the monocyte-macrophage system and enhance the activity of immunoagents. Has bacteriolytic activity against M.luteus. In Gallus gallus (Chicken), this protein is Lysozyme C (LYZ).